The sequence spans 625 residues: Vicilin-like antimicrobial peptides 2-3 (625 aa).

Disordered stretches follow at residues 120 to 152 (QQKR…QQRE) and 180 to 212 (RQHG…NPYY). Positions 198–212 (RYEEGEEKQSDNPYY) are enriched in basic and acidic residues. 2 Cupin type-1 domains span residues 230–369 (SVLE…ERLR) and 414–584 (YNLF…KEVE). Residues 594–614 (IFFPGPRQHQQQSPRSTKQQQ) form a disordered region. Positions 601–614 (QHQQQSPRSTKQQQ) are enriched in low complexity.

It belongs to the 7S seed storage protein family.

The protein localises to the secreted. Its function is as follows. Antimicrobial peptides 2b, 2c and 2d have antibacterial and antifungal activity against a range of species. The polypeptide is Vicilin-like antimicrobial peptides 2-3 (Macadamia integrifolia (Macadamia nut)).